We begin with the raw amino-acid sequence, 419 residues long: MEKFVIEGKQRLTGRVKISGAKNAALPILAGALLTGGTVRLTEVPELTDIYTMLEVLKALGAKVTFSEGEVVLHTPEITSAEAPYEQVRKMRASFLVMGPLLARTGRARISLPGGCAIGARPIDLHLKGFEALGAKIEMGHGFIEATAPRLKGTTVYLDFPSVGATENIMMAAVLAEGQTIIENAAEEPEIVDLANFLNNMGAKIKGAGTKVIRITGVKDLDGVNHTVIPDRIEAGTFMIGAVATQGEVIVENVITDHLTPLIAKLIEAGAEVIEDEDQNALLVRSNGKLKPLDIKTLPYPGFPTDLQAQMMALLATVPGISVVTETVFENRFMHVTELNRMGAKIRIEGRSAFIEGVESLTGARVKATDLRAGAALVIAGLVADGVTEVGHIFHIDRGYERFEEKLRGLGAKIERVSD.

Residue 22–23 coordinates phosphoenolpyruvate; sequence KN. Arginine 92 contributes to the UDP-N-acetyl-alpha-D-glucosamine binding site. The active-site Proton donor is the cysteine 116. Cysteine 116 is modified (2-(S-cysteinyl)pyruvic acid O-phosphothioketal). UDP-N-acetyl-alpha-D-glucosamine is bound by residues 121 to 125, aspartate 306, and valine 328; that span reads RPIDL.

The protein belongs to the EPSP synthase family. MurA subfamily.

It localises to the cytoplasm. It catalyses the reaction phosphoenolpyruvate + UDP-N-acetyl-alpha-D-glucosamine = UDP-N-acetyl-3-O-(1-carboxyvinyl)-alpha-D-glucosamine + phosphate. It functions in the pathway cell wall biogenesis; peptidoglycan biosynthesis. Its function is as follows. Cell wall formation. Adds enolpyruvyl to UDP-N-acetylglucosamine. The chain is UDP-N-acetylglucosamine 1-carboxyvinyltransferase 2 from Carboxydothermus hydrogenoformans (strain ATCC BAA-161 / DSM 6008 / Z-2901).